Here is an 87-residue protein sequence, read N- to C-terminus: Small ribosomal subunit protein bS20 (87 aa).

Residues 1–22 form a disordered region; the sequence is MANSPQAKKRARQNEKRFAINK.

The protein belongs to the bacterial ribosomal protein bS20 family.

Its function is as follows. Binds directly to 16S ribosomal RNA. This is Small ribosomal subunit protein bS20 from Ruegeria sp. (strain TM1040) (Silicibacter sp.).